The primary structure comprises 433 residues: GTPase Der (433 aa).

EngA-type G domains lie at 5-167 (KKVL…GEVG) and 174-349 (IKVG…DQLE). GTP is bound by residues 11-18 (GRPNVGKS), 58-62 (DTGGF), 119-122 (NKVD), 180-187 (GKPNSGKS), 227-231 (DTAGI), and 292-295 (SKWD). The KH-like domain occupies 349–429 (ELKTSTPDLN…PILVELKEKI (81 aa)).

It belongs to the TRAFAC class TrmE-Era-EngA-EngB-Septin-like GTPase superfamily. EngA (Der) GTPase family. As to quaternary structure, associates with the 50S ribosomal subunit.

GTPase that plays an essential role in the late steps of ribosome biogenesis. This is GTPase Der from Borreliella burgdorferi (strain ATCC 35210 / DSM 4680 / CIP 102532 / B31) (Borrelia burgdorferi).